We begin with the raw amino-acid sequence, 352 residues long: Probable protein kinase DDB_G0291842 (352 aa).

Residues 1 to 57 form a disordered region; it reads MRPLPDQSAFEDKSELVSKKQKNEDENNENRSPETPRTPKVCPKTPTKTPLRTPTKN. The span at 10 to 34 shows a compositional bias: basic and acidic residues; sequence FEDKSELVSKKQKNEDENNENRSPE. The segment covering 38–56 has biased composition (low complexity); it reads TPKVCPKTPTKTPLRTPTK. The 255-residue stretch at 77–331 folds into the Protein kinase domain; the sequence is FEYINQIGEG…IQSLLKYDKL (255 aa). ATP-binding positions include 83-91 and lysine 106; that span reads IGEGSFAKV. Aspartate 207 acts as the Proton acceptor in catalysis. The Mg(2+) site is built by asparagine 212 and aspartate 225.

The protein belongs to the protein kinase superfamily. Ser/Thr protein kinase family. WEE1 subfamily.

It carries out the reaction L-seryl-[protein] + ATP = O-phospho-L-seryl-[protein] + ADP + H(+). The catalysed reaction is L-threonyl-[protein] + ATP = O-phospho-L-threonyl-[protein] + ADP + H(+). This chain is Probable protein kinase DDB_G0291842, found in Dictyostelium discoideum (Social amoeba).